A 283-amino-acid chain; its full sequence is MPSIRATHWCFTLNFSGSIPEINWTADVQYSIWQHERVGHDHLQGYIQMNKHVTLKKMKELLPGAHLEMAKAPKKAIEYCQKKESAIAGPWEYGTWISSGSHKRKLMERFEDGPEEMKLEDPGLYRRCLSRVQMKKIRESCTWNFDLRPWQDELLKTIEQEPDDRTIIWVYGPHGGEGKSAFAKYLTLKEGWWYTAGGKATDMLYSYSLDPTCHVCIDIPRCTREEYINYSVIEQIKNRVIINTKYEPCTIRDDGHNVHVIVFCNFLPDVTRISEDRIKIINC.

The region spanning 3-96 (SIRATHWCFT…IAGPWEYGTW (94 aa)) is the CRESS-DNA virus Rep endonuclease domain. Residues 10–13 (CFTL) carry the RCR-1 motif. Residues Glu36 and His42 each coordinate a divalent metal cation. An RCR-2 motif is present at residues 42–44 (HLQ). The Nuclear localization signal signature appears at 51–71 (KHVTLKKMKELLPGAHLEMAK). Catalysis depends on Tyr79, which acts as the For DNA cleavage activity. Positions 79–82 (YCQK) match the RCR-3 motif. Glu84 serves as a coordination point for a divalent metal cation. A Nuclear localization signal motif is present at residues 96-102 (WISSGSH). 178-180 (GKS) contributes to the ATP binding site.

This sequence belongs to the nanoviridea/circoviridae replication-associated protein family. As to quaternary structure, homooligomer (Potential). Rep binds to repeated DNA motifs (iterons). Mg(2+) serves as cofactor. Requires Mn(2+) as cofactor.

It is found in the host nucleus. The enzyme catalyses ATP + H2O = ADP + phosphate + H(+). Functionally, initiates and terminates the replication only of its own subviral DNA molecule. The closed circular ssDNA genome is first converted to a superhelical dsDNA. Rep binds a specific hairpin at the genome origin of replication. Introduces an endonucleolytic nick within the intergenic region of the genome, thereby initiating the rolling circle replication (RCR). Following cleavage, binds covalently to the 5'-phosphate of DNA as a tyrosyl ester. The cleavage gives rise to a free 3'-OH that serves as a primer for the cellular DNA polymerase. The polymerase synthesizes the (+) strand DNA by rolling circle mechanism. After one round of replication, a Rep-catalyzed nucleotidyl transfer reaction releases a circular single-stranded virus genome, thereby terminating the replication. Displays origin-specific DNA cleavage, nucleotidyl transferase, ATPase and helicase activities. In Faba bean necrotic yellows C7 alphasatellite (FBNYC7A), this protein is Para-Rep C7 (C7).